The chain runs to 283 residues: MSTYLIGDVHGCFDELKSLLAQVAFDPQQDQLWLTGDLVARGPGSLDVLRYVRSLGPAVRMVLGNHDLHLLAVYAGISRNKPKDRITPLLEAPDADELINWLRRQPVLQVDEQLKLVMAHAGITPQWDIETAQLCAREVEAVLSSDSYPLFLDAMYGDMPNNWSPELSGLARLRFSTNALTRMRYCFPNGQLDMICKDAPGTAPAPLKPWFELPRLVDADYTIIFGHWASLEGRGTPAGVIGLDTGCCWGGDLTMLRWEDQQYFTQPANRRDLLDGVHQQAAS.

It belongs to the Ap4A hydrolase family.

The enzyme catalyses P(1),P(4)-bis(5'-adenosyl) tetraphosphate + H2O = 2 ADP + 2 H(+). Hydrolyzes diadenosine 5',5'''-P1,P4-tetraphosphate to yield ADP. This Serratia proteamaculans (strain 568) protein is Bis(5'-nucleosyl)-tetraphosphatase, symmetrical.